The sequence spans 186 residues: Probable RNA 2'-phosphotransferase (186 aa).

The protein belongs to the KptA/TPT1 family.

In terms of biological role, removes the 2'-phosphate from RNA via an intermediate in which the phosphate is ADP-ribosylated by NAD followed by a presumed transesterification to release the RNA and generate ADP-ribose 1''-2''-cyclic phosphate (APPR&gt;P). May function as an ADP-ribosylase. This is Probable RNA 2'-phosphotransferase from Clostridium perfringens (strain SM101 / Type A).